Reading from the N-terminus, the 159-residue chain is RNA pyrophosphohydrolase (159 aa).

Residues 6-149 form the Nudix hydrolase domain; it reads GFRPNVGIIL…KREVYRRALK (144 aa). Positions 38–59 match the Nudix box motif; sequence GGINPDETPEDALYRELNEEVG.

It belongs to the Nudix hydrolase family. RppH subfamily. Requires a divalent metal cation as cofactor.

Its function is as follows. Accelerates the degradation of transcripts by removing pyrophosphate from the 5'-end of triphosphorylated RNA, leading to a more labile monophosphorylated state that can stimulate subsequent ribonuclease cleavage. This is RNA pyrophosphohydrolase from Pseudomonas entomophila (strain L48).